A 230-amino-acid polypeptide reads, in one-letter code: Probable phosphatase IndB (230 aa).

The Nucleophile role is filled by Asp8. Residues Asp8, Asp10, and Asp169 each coordinate Mg(2+). Asp10 serves as the catalytic Proton donor.

Belongs to the HAD-like hydrolase superfamily. The cofactor is Mg(2+).

Part of an operon that could be involved in the biosynthesis of the blue pigment indigoidine, which is implicated in pathogenicity and protection from oxidative stress. In Dickeya dadantii (strain 3937) (Erwinia chrysanthemi (strain 3937)), this protein is Probable phosphatase IndB.